The sequence spans 261 residues: Zinc import ATP-binding protein ZnuC (261 aa).

The ABC transporter domain maps to 6 to 221; it reads IRLEQVGVTF…PAFVELFGKN (216 aa). An ATP-binding site is contributed by 38-45; that stretch reads GPNGAGKT.

The protein belongs to the ABC transporter superfamily. Zinc importer (TC 3.A.1.15.5) family. As to quaternary structure, the complex is composed of two ATP-binding proteins (ZnuC), two transmembrane proteins (ZnuB) and a solute-binding protein (ZnuA).

The protein resides in the cell inner membrane. It carries out the reaction Zn(2+)(out) + ATP(in) + H2O(in) = Zn(2+)(in) + ADP(in) + phosphate(in) + H(+)(in). Part of the ABC transporter complex ZnuABC involved in zinc import. Responsible for energy coupling to the transport system. This Pseudomonas fluorescens (strain ATCC BAA-477 / NRRL B-23932 / Pf-5) protein is Zinc import ATP-binding protein ZnuC.